Consider the following 576-residue polypeptide: Eukaryotic translation initiation factor 3 subunit L (576 aa).

The PCI domain maps to 330–536 (DAIRVFANIL…IHIADTKVAR (207 aa)).

It belongs to the eIF-3 subunit L family. As to quaternary structure, component of the eukaryotic translation initiation factor 3 (eIF-3) complex, which is composed of 13 subunits: eif3a, eif3b, eif3c, eif3d, eif3e, eif3f, eif3g, eif3h, eif3i, eif3j, eif3k, eif3l and eif3m.

The protein localises to the cytoplasm. Its function is as follows. Component of the eukaryotic translation initiation factor 3 (eIF-3) complex, which is involved in protein synthesis of a specialized repertoire of mRNAs and, together with other initiation factors, stimulates binding of mRNA and methionyl-tRNAi to the 40S ribosome. The eIF-3 complex specifically targets and initiates translation of a subset of mRNAs involved in cell proliferation. In Danio rerio (Zebrafish), this protein is Eukaryotic translation initiation factor 3 subunit L (eif3l).